We begin with the raw amino-acid sequence, 2594 residues long: MQKRGREVSCLLISLTAICLVVTPGSRVCPRRCACYVPTEVHCTFRYLTSIPDGIPANVERVNLGYNSLTRLTENDFSGLSRLELLMLHSNGIHRVSDKTFSGLQSLQVLKMSYNKVQIIEKDTLYGLRSLTRLHLDHNNIEFINPEAFYGLTLLRLVHLEGNRLTKLHPDTFVSLSYLQIFKTSFIKYLYLSDNFLTSLPKEMVSSMPNLESLYLHGNPWTCDCHLKWLSEWMQGNPDIIKCKKERIPSSPQQCPLCMNPRISKGRSIAMVPSGSFLCTKPTIDPSLKSKSLGIQEDNGSASVSPQDFIEPFGSLSLNMTDLSGNKANVICSIQKPSRTLPIAFTEENDYIMLNMSFSTNLVCSVNYNHIQPVWQLLALYSDSPLILERKPQHTETPLLSPKYQQVALRPEDTFTNIEADFKADPFWFQQEKISLQLNRTATTLSTLQIQFSTDAQITLPKAEMRPVKRKWTMILMMNNTRLEHTVLVGGTIALDCPGKGDPSPHLEWVLADGSKVRAPYVSEDGRILIDKKGKLELQMADTFDAGLYHCISTNDADADILTYRITVVEPYVENKHENGALHTVIMGEILDLPCLSTGIPDASISWILPRNTVFSQSSRDMQILNNGTLRILQATPKDQGHYRCVAANPSGADFSSFQVSVQMKGQRTIEHDRDIDGSGLEEPKPSVLLKQPPSLKLPASSLTGTEAGKQVSGIHKKNKHRDLTHRRRGDSTLRRFREHRRQLPLSARRIDPQHWAALLEKAKKNSVLRKQENTTVKPTPLAIPLVELAGEEKDASGLTPPDEEFTVLKTKAFGVPERSPTADSRPVNHGFVTSSASGTEVSSTVNPQTLLPTHLPDFKLFNVVDSAAVSKSMNRPVTSKIEDTTHQNPIIIFPSVAEIQDSAQVGRTSSQSAHPATGGAMATYGYTTMLSSFTNKANTVLQSANPTESYGPQIPLTEVSRVSSNNSLAHTTKDPGFSKRPSDSHTTAPSLFQTPRNNSTGNVGRERTIWSRGRAISPYRTPVLRRHRHRIVRPALKGPANRNISQVSATEPPGMCRTCSSTERLTMATAALSVTGSSHTTLPKANNVGIISEESTTVVKKPSLLLKNKQDVDIETITTTINYFRSESTHMTPTEASMISAPTSISLGKTPIDTSGHLSMPRTIQAGTDLVVTPPLSSPLSQPSIPTKATSTKLSRRKIPWHPIFANNHNKEGMLKNLHQFGLQKNTATKPPEKAPLLPTDHGSSSPSTTLLASLTPAQSATMAATRRNGTEVQGARSLSAGKEQPFINSFLVLPSTTRKRSSTLSFLSVETPTVTTPPVIASAIISETQEVRSKKAKDQTKGSLKNRKGPTITPRQISGYSTYSVPTTTDTPLAFSHSPGKVTGRTVSTAAPHSAASLLGITELPQKCTHTSGNITASETTLLSKSQESTAMKRASATPPLLSSGAPRMPTPSPPPFTKVVVTDSEVPAVFKMMSNRMVTIYESSRHDIDLQQPSAEASPNPEILTGSTDFPLSSLLTSTPMPAPRVDKPQDSQWKPSPWPENKFQLRSYSETIEKGKRPEISLSPHLSFPEASTHALHWNAQRHAEKSVFDKKPAQNPTSKHLPYDSLPKTILKKPRIIGGKAASFTVPTNSDVLLPCEAVGDPKPTIHWTRVSSGREISRGIQKTRFHVLPNGTLSIQRVSIQDRGQYLCAASNPLGVDHLHVTLSVVSYPARILESHVKEITAHSGSTVKLKCRVEGMPRPTISWILANQTVVSETPEGSRKVWVTPDGTLIIHNLSLYDRGFYKCVANNPSGQDSLLVKIQVITAPPVIIEQKRQAIVGVLGESLKLPCTAKGTPQPSVHWVLYDGTELKPLQLTHSRFFLYPNGTLYIRNIVSSVRGTYECIATSSSGSERRVVILRVEEQETVPRIETASQKWTEVNLGEKLLLNCSATGDPKPTIIWKLPSKVVIDQWHRMGSRIHVYPNGSLVIGSVTEKDGGDYLCVARNKMGDDLVLMHVRLRLTPAKIEHKQHFKKQVLHGKDFQVDCKASGSPVPEVSWSLPDGTVVNNVAQADDSGYRTKRYTLFHNGTLYFNKVGMAEEGDYICSAQNTLGKDEMKVHLTVLTAIPRIRQNYRSNVRIKAGDTAVLDCEVTGEPKPNVFWLLPSNNVISFSNDRFIFHANGTLSINKVKPLDSGKYVCVAQNPSGDDTKTYKLDIVSRPPLINGLYANKTVIKATAIQHSKKHLDCRADGVPPPQITWIMPDNIFLTAPYYGGRITVHQNGTLEIRNIRLSDSADFTCVVRSEGGESVLVVQLKVLEMLRRPTFRNPFNEKVVAQVGKPVAMNCSVDGNPTPEIIWILPDGTQFANGPQNSPYLMASNGSLIVYKATRNKSGKYRCTARNKVGYIEKLILLEIGQKPVILTYEPGMIKSAGGESLSLHCVSDGIPKPNVKWTTPGGLVIDRPQVGGKYILHENGTLVIKETTAHDRGNYICKAQNSVGQAVISVPVTIVAYPPRIINYLPRSMLRRTGEAMQLHCVALGVPKPQITWETPGYSLLSTATERRPHRSEMLPLQGTLVIQNLRASDSGVYKCRAQNVLGADYATTYIQVL.

Residues 1–25 (MQKRGREVSCLLISLTAICLVVTPG) form the signal peptide. An LRRNT domain is found at 29–56 (CPRRCACYVPTEVHCTFRYLTSIPDGIP). LRR repeat units lie at residues 58–79 (NVER…DFSG), 82–103 (RLEL…TFSG), 106–127 (SLQV…TLYG), 130–151 (SLTR…AFYG), 154–175 (LLRL…TFVS), and 186–207 (FIKY…MVSS). An LRRCT domain is found at 219 to 281 (NPWTCDCHLK…VPSGSFLCTK (63 aa)). Asn439 is a glycosylation site (N-linked (GlcNAc...) asparagine). Ig-like C2-type domains are found at residues 461-567 (PKAE…YRIT) and 571-661 (PYVE…FQVS). 2 disulfides stabilise this stretch: Cys497–Cys551 and Cys595–Cys645. N-linked (GlcNAc...) asparagine glycosylation occurs at Asn627. Over residues 670 to 685 (IEHDRDIDGSGLEEPK) the composition is skewed to basic and acidic residues. Disordered stretches follow at residues 670–725 (IEHD…RDLT) and 963–1008 (VSSN…GRER). Residues 715–725 (IHKKNKHRDLT) are compositionally biased toward basic residues. Basic and acidic residues predominate over residues 972–984 (TTKDPGFSKRPSD). The span at 985-1003 (SHTTAPSLFQTPRNNSTGN) shows a compositional bias: polar residues. Residue Asn1044 is glycosylated (N-linked (GlcNAc...) asparagine). Disordered regions lie at residues 1228–1251 (TATK…PSTT), 1333–1364 (VRSK…GYST), and 1428–1457 (SQES…PSPP). Positions 1333-1342 (VRSKKAKDQT) are enriched in basic and acidic residues. The segment covering 1355–1364 (TPRQISGYST) has biased composition (polar residues). Ig-like C2-type domains are found at residues 1619 to 1710 (PRII…VTLS), 1715 to 1807 (PARI…VKIQ), 1812 to 1901 (PPVI…RRVV), 1912 to 2005 (PRIE…VRLR), 2008 to 2106 (PAKI…VHLT), 2112 to 2200 (PRIR…YKLD), 2205 to 2302 (PPLI…LKVL), 2308 to 2398 (PTFR…ILLE), 2403 to 2493 (PVIL…VPVT), and 2499 to 2592 (PRII…TYIQ). 3 cysteine pairs are disulfide-bonded: Cys1641–Cys1694, Cys1738–Cys1791, and Cys1835–Cys1888. One copy of the LRR 11 repeat lies at 1658 to 1681 (SGREISRGIQKTRFHVLPNGTLSI). Residues Asn1676, Asn1780, Asn1870, and Asn1933 are each glycosylated (N-linked (GlcNAc...) asparagine). Cystine bridges form between Cys1934-Cys1987, Cys2031-Cys2090, Cys2134-Cys2184, Cys2232-Cys2284, Cys2330-Cys2382, Cys2425-Cys2477, and Cys2521-Cys2576. N-linked (GlcNAc...) asparagine glycosylation occurs at Asn2072. Asn2364 carries an N-linked (GlcNAc...) asparagine glycan. Tyr2574 carries the post-translational modification Phosphotyrosine.

In terms of tissue distribution, in the embryo, expressed in the nasal mesenchyme.

It is found in the secreted. Its function is as follows. Involved in the control of early migration of neurons expressing gonadotropin-releasing hormone (GNRH neurons). May be involved in the maintenance of osteochondroprogenitor cells pool. The polypeptide is Immunoglobulin superfamily member 10 (Igsf10) (Mus musculus (Mouse)).